Here is a 143-residue protein sequence, read N- to C-terminus: MSAVPSVQTFGKKKSATAVAHVKAGKGLIKVNGAPITLVQPEILRFKVYEPLLLVGLDKFTNIDIRVRVTGGGHVSQVYAIRQAIAKGLIAYHQKFVDEQSKNELKRAFTLYDRTLLIADSRMPEPKKFGGKGARSRYQKSYR.

N-acetylserine is present on S2. A disordered region spans residues 123–143 (MPEPKKFGGKGARSRYQKSYR). Basic residues predominate over residues 134-143 (ARSRYQKSYR).

The protein belongs to the universal ribosomal protein uS9 family.

The chain is Small ribosomal subunit protein uS9 (RPS16) from Maudiozyma exigua (Yeast).